The primary structure comprises 254 residues: Small ribosomal subunit protein uS5 (254 aa).

Residues 1–10 are compositionally biased toward polar residues; the sequence is MSAPEAQQQK. The segment at 1-34 is disordered; the sequence is MSAPEAQQQKRGGFGGRNRGRPNRRGPRNTEEKG. Residue Ser2 is modified to N-acetylserine. Arg11 carries the post-translational modification Asymmetric dimethylarginine; by HMT1; alternate. Arg11 bears the Omega-N-methylarginine; by HMT1; alternate mark. Arg17 carries the post-translational modification Omega-N-methylarginine; by HMT1. A compositionally biased stretch (basic residues) spans 18 to 27; the sequence is NRGRPNRRGP. Lys33 is covalently cross-linked (Glycyl lysine isopeptide (Lys-Gly) (interchain with G-Cter in ubiquitin)). One can recognise an S5 DRBM domain in the interval 76–139; it reads LQDEVMNIKP…IIAKLSVIPI (64 aa).

Belongs to the universal ribosomal protein uS5 family. Component of the small ribosomal subunit (SSU). Mature yeast ribosomes consist of a small (40S) and a large (60S) subunit. The 40S small subunit contains 1 molecule of ribosomal RNA (18S rRNA) and 33 different proteins (encoded by 57 genes). The large 60S subunit contains 3 rRNA molecules (25S, 5.8S and 5S rRNA) and 46 different proteins (encoded by 81 genes). Interacts with snoRNA U3. Interacts with MPP10. Component of the ribosomal small subunit (SSU) processome composed of at least 40 protein subunits and snoRNA U3. N-terminally acetylated by acetyltransferase NatA.

The protein localises to the cytoplasm. It is found in the nucleus. The protein resides in the nucleolus. Functionally, component of the ribosome, a large ribonucleoprotein complex responsible for the synthesis of proteins in the cell. The small ribosomal subunit (SSU) binds messenger RNAs (mRNAs) and translates the encoded message by selecting cognate aminoacyl-transfer RNA (tRNA) molecules. The large subunit (LSU) contains the ribosomal catalytic site termed the peptidyl transferase center (PTC), which catalyzes the formation of peptide bonds, thereby polymerizing the amino acids delivered by tRNAs into a polypeptide chain. The nascent polypeptides leave the ribosome through a tunnel in the LSU and interact with protein factors that function in enzymatic processing, targeting, and the membrane insertion of nascent chains at the exit of the ribosomal tunnel. uS5 is important for the assembly and function of the 40S ribosomal subunit. Mutations in this protein affects the control of translational fidelity. Involved in nucleolar processing of pre-18S ribosomal RNA and ribosome assembly. The polypeptide is Small ribosomal subunit protein uS5 (Saccharomyces cerevisiae (strain ATCC 204508 / S288c) (Baker's yeast)).